Here is a 205-residue protein sequence, read N- to C-terminus: Syndecan 4-B (205 aa).

A signal peptide spans 1-17; that stretch reads MNRLLLLLALVLSGVAA. At 18 to 162 the chain is on the extracellular side; it reads ESIRETETMD…FFQRTEVIVA (145 aa). A disordered region spans residues 26–113; it reads MDPTSMLEYE…HDFDETKTGR (88 aa). O-linked (Xyl...) (glycosaminoglycan) serine glycans are attached at residues serine 37, serine 73, and serine 75. Residues 44-94 show a composition bias toward acidic residues; that stretch reads VFVDEDDDDDYEDGVDYEIDSESDNDEDYSGSGDDDFDDEDNVEDEDEEET. A compositionally biased stretch (basic and acidic residues) spans 102-113; that stretch reads PEHDFDETKTGR. The helical transmembrane segment at 163-183 threads the bilayer; sequence IIAGTLVGLVVAVSFIVFLVI. At 184–205 the chain is on the cytoplasmic side; the sequence is RRNQNGDLVKKPIYKKTSTMEV.

This sequence belongs to the syndecan proteoglycan family. In terms of assembly, interacts with the Wnt receptor fzd7 and its signal transducer dvl2/dsh. Post-translationally, O-glycosylated; contains both chondroitin sulfate and heparan sulfate. Ser-37, Ser-73 and Ser-75 can all be modified by either chondroitin sulfate or heparan sulfate, and the protein exists in forms that contain only chondroitin sulfate, only heparan sulfate and both chondroitin sulfate and heparan sulfate. As to expression, expressed in the animal hemisphere from the 4-cell to the blastula stage. During gastrulation, expressed in the involuting dorsal mesoderm and ectoderm. After involution, localized mainly to the anterior neuroectoderm. At later stages, expressed in the brain, branchial arches, pronephros, tailbud, and at low levels in the somites.

The protein resides in the membrane. Cell surface proteoglycan. Regulates non-canonical Wnt signaling, being necessary and sufficient for fibronectrin-mediated translocation of dvl2/dsh to the plasma membrane. Required for proper convergent extension movements during gastrulation, which shape the neural plate, and for subsequent neural tube closure. The chain is Syndecan 4-B (sdc4-b) from Xenopus laevis (African clawed frog).